We begin with the raw amino-acid sequence, 113 residues long: U11-theraphotoxin-Hhn1a (113 aa).

The first 21 residues, 1 to 21 (MNTVRVTFLLVFVLAVSLGQA), serve as a signal peptide directing secretion. A propeptide spanning residues 22–74 (DKDENRMEMQEKTEQGKSYLDFAENLLLQKLEELEAKLLEEDSEESRNSRQRR) is cleaved from the precursor. The tract at residues 61–83 (EEDSEESRNSRQRRCIGEGVPCD) is disordered. Intrachain disulfides connect Cys-75/Cys-90, Cys-82/Cys-95, and Cys-89/Cys-110.

This sequence belongs to the neurotoxin 14 (magi-1) family. 01 (HNTX-16) subfamily. Expressed by the venom gland.

The protein resides in the secreted. Its function is as follows. Probable ion channel inhibitor. The chain is U11-theraphotoxin-Hhn1a from Cyriopagopus hainanus (Chinese bird spider).